We begin with the raw amino-acid sequence, 152 residues long: 3-hydroxyacyl-[acyl-carrier-protein] dehydratase FabZ (152 aa).

His57 is an active-site residue.

Belongs to the thioester dehydratase family. FabZ subfamily.

The protein resides in the cytoplasm. It carries out the reaction a (3R)-hydroxyacyl-[ACP] = a (2E)-enoyl-[ACP] + H2O. Involved in unsaturated fatty acids biosynthesis. Catalyzes the dehydration of short chain beta-hydroxyacyl-ACPs and long chain saturated and unsaturated beta-hydroxyacyl-ACPs. This chain is 3-hydroxyacyl-[acyl-carrier-protein] dehydratase FabZ, found in Xanthomonas axonopodis pv. citri (strain 306).